Consider the following 1379-residue polypeptide: DNA-directed RNA polymerase subunit beta'' (1379 aa).

The Zn(2+) site is built by Cys-220, Cys-291, Cys-298, and Cys-301.

The protein belongs to the RNA polymerase beta' chain family. RpoC2 subfamily. As to quaternary structure, in plastids the minimal PEP RNA polymerase catalytic core is composed of four subunits: alpha, beta, beta', and beta''. When a (nuclear-encoded) sigma factor is associated with the core the holoenzyme is formed, which can initiate transcription. Requires Zn(2+) as cofactor.

It is found in the plastid. It carries out the reaction RNA(n) + a ribonucleoside 5'-triphosphate = RNA(n+1) + diphosphate. DNA-dependent RNA polymerase catalyzes the transcription of DNA into RNA using the four ribonucleoside triphosphates as substrates. The protein is DNA-directed RNA polymerase subunit beta'' of Cuscuta reflexa (Southern Asian dodder).